The sequence spans 156 residues: Aspercryptin biosynthesis cluster protein B (156 aa).

Residues 1-39 form the signal peptide; sequence MRMANRIGAGRKSALQLSHLRTRLTSSAAAVATAPTLDP.

This sequence belongs to the YciI family.

The protein operates within secondary metabolite biosynthesis. In terms of biological role, part of the gene cluster that mediates the biosynthesis of aspercryptins, linear lipopeptides built from six amino acids including 2 highly unusual and nonproteogenic amino acids, 2-amino-octanoic acid (2aoa) and 2-amino-dodecanol (2adol). The core structure of aspercryptins is as follows: Ser/Ala-Thr-Ile/Val-2aoa-Aasn-2adol. The first step of aspercryptin biosynthesis is the generation of the fatty acid precursors, octanoic and dodecanoic acids, by the FAS subunits atnF and atnM. The fatty acid precursors are likely transformed into the corresponding alpha-amino fatty acids in three steps. First, they are hydroxylated by the cytochrome P450 monooxygenase atnE, then oxidized to the corresponding alpha-keto acids by the NAD(P)-dependent oxidoreductase atnD, and finally converted to the alpha-amino fatty acids by the PLP-dependent aminotransferases atnH or atnJ. the alpha-amino fatty acids, 2-amino-octanoic and 2-amino-dodecanoic acids, are recognized, activated, and covalently tethered to the NRPS atnA by its fourth and sixth adenylation domains. The second module of atnA is the Thr module and contains an epimerase (E) domain responsible for the epimerization of Thr to D-allo-Thr. Additionally, despite atnA having only one epimerase domain, the first amino acid of aspercryptin A1 is D-Ser, suggesting that serine is either loaded directly as D-Ser on the first module or that the epimerase domain in the threonine module epimerizes both L-Ser and L-Thr. After condensation of the hexapeptide of aspercryptin, the C-terminal reductase (TE) domain might be involved in the reductive release and production of the aldehyde hexapeptide. Further reduction would generate aspercryptins. The variety of aspercryptins produced reflects the flexibility of the atnA NRPS, allowing incorporation of alanine instead of serine, valine for isoleucine, and a C10 fatty amino alcohol instead of the C12 version. AtnB seems to be involved in the selectivity for Ile versus Val by the third module. Moreover, type B, C and D aspercryptins have an additional N-terminal cichorine, acetyl and propionyl group respectively. The sequence is that of Aspercryptin biosynthesis cluster protein B from Emericella nidulans (strain FGSC A4 / ATCC 38163 / CBS 112.46 / NRRL 194 / M139) (Aspergillus nidulans).